The primary structure comprises 484 residues: ETS translocation variant 4 (484 aa).

A Glycyl lysine isopeptide (Lys-Gly) (interchain with G-Cter in SUMO2) cross-link involves residue Lys6. Residues 90–115 (SPTTRIKKEPQSPRTDPALSCSRKPP) form a disordered region. Residue Lys96 forms a Glycyl lysine isopeptide (Lys-Gly) (interchain with G-Cter in SUMO) linkage. A Phosphoserine modification is found at Ser101. Lys139 participates in a covalent cross-link: Glycyl lysine isopeptide (Lys-Gly) (interchain with G-Cter in SUMO2). Residues Ser140, Ser149, and Ser214 each carry the phosphoserine modification. Residues Lys226 and Lys260 each participate in a glycyl lysine isopeptide (Lys-Gly) (interchain with G-Cter in SUMO) cross-link. A Glycyl lysine isopeptide (Lys-Gly) (interchain with G-Cter in SUMO2) cross-link involves residue Lys322. A DNA-binding region (ETS) is located at residues 341–421 (LQLWQFLVAL…AGERYVYKFV (81 aa)).

Belongs to the ETS family. Post-translationally, sumoylated; enhanced upon ERK/MAP kinase pathway activation, it positively regulates the transcriptional activator capacity. Sumoylation at Lys-96 probably requires phosphorylation at Ser-101. Transiently polysumoylated and desumoylated by SENP1. Sumoylation is a prerequisite to polyubiquitination which in turn increases proteasomal-mediated degradation. Probably polyubiquitinated by RNF4 and deubiquitinated by USP2. Expressed in keratinocytes.

Its subcellular location is the nucleus. Functionally, transcriptional activator. May play a role in keratinocyte differentiation. (Microbial infection) Binds to the enhancer of the adenovirus E1A gene and acts as a transcriptional activator; the core-binding sequence is 5'-[AC]GGA[AT]GT-3'. This Homo sapiens (Human) protein is ETS translocation variant 4 (ETV4).